Here is a 266-residue protein sequence, read N- to C-terminus: Protein PYRICULARIA ORYZAE RESISTANCE 21 (266 aa).

Residues 1-68 (MGILVILVDL…IWCKAGKIIK (68 aa)) enclose the HMA domain. Residues cysteine 12 and cysteine 15 each contribute to the a metal cation site. Residues 129–156 (CEKPKPCEKPPPCKPEEPPKPPPEKPPP) are disordered. Basic and acidic residues predominate over residues 142 to 156 (KPEEPPKPPPEKPPP).

Functionally, involved in defense responses. Contributes to slowing defense responses toward Magnaporthe oryzae. This is Protein PYRICULARIA ORYZAE RESISTANCE 21 from Oryza sativa subsp. japonica (Rice).